We begin with the raw amino-acid sequence, 405 residues long: 2,3-diketo-5-methylthiopentyl-1-phosphate enolase (405 aa).

Residue Lys-91 is the Proton acceptor of the active site. Substrate-binding positions include Lys-140, 166-169 (KDDE), His-257, Gly-329, and 351-352 (GG). Mg(2+) contacts are provided by Lys-166, Asp-168, and Glu-169. Position 166 is an N6-carboxylysine (Lys-166).

Belongs to the RuBisCO large chain family. Type IV subfamily. In terms of assembly, homodimer. Mg(2+) serves as cofactor.

It catalyses the reaction 5-methylsulfanyl-2,3-dioxopentyl phosphate = 2-hydroxy-5-methylsulfanyl-3-oxopent-1-enyl phosphate. It functions in the pathway amino-acid biosynthesis; L-methionine biosynthesis via salvage pathway; L-methionine from S-methyl-5-thio-alpha-D-ribose 1-phosphate: step 3/6. Its function is as follows. Catalyzes the enolization of 2,3-diketo-5-methylthiopentyl-1-phosphate (DK-MTP-1-P) into 2-hydroxy-3-keto-5-methylthiopentenyl-1-phosphate (HK-MTPenyl-1-P). The polypeptide is 2,3-diketo-5-methylthiopentyl-1-phosphate enolase (Bacillus licheniformis (strain ATCC 14580 / DSM 13 / JCM 2505 / CCUG 7422 / NBRC 12200 / NCIMB 9375 / NCTC 10341 / NRRL NRS-1264 / Gibson 46)).